We begin with the raw amino-acid sequence, 786 residues long: Signal transducer and activator of transcription 5B (786 aa).

Y90 is modified (phosphotyrosine). S128 carries the phosphoserine modification. Residues 589 to 686 (WNDGAILGFV…EVYSKYYTPV (98 aa)) enclose the SH2 domain. 2 positions are modified to phosphotyrosine: Y682 and Y699.

The protein belongs to the transcription factor STAT family. Upon activation, forms a homodimer or a heterodimer with a related family member. Binds NR3C1. Interacts with NCOA1. Interacts with NMI. Interacts with SOCS7. Interacts (via SH2 domain) with INSR. Interacts with CPEB3; this inhibits STAT5B-mediated transcriptional activation. Tyrosine phosphorylated in response to signaling via activated KIT, resulting in translocation to the nucleus. Tyrosine phosphorylated in response to signaling via activated FLT3; wild-type FLT3 results in much weaker phosphorylation than constitutively activated mutant FLT3. Alternatively, can be phosphorylated by JAK2. Phosphorylation at Tyr-699 by PTK6 or HCK leads to an increase of its transcriptional activity.

Its subcellular location is the cytoplasm. It is found in the nucleus. Its function is as follows. Carries out a dual function: signal transduction and activation of transcription. Mediates cellular responses to the cytokine KITLG/SCF and other growth factors. Binds to the GAS element and activates PRL-induced transcription. Positively regulates hematopoietic/erythroid differentiation. This is Signal transducer and activator of transcription 5B (Stat5b) from Rattus norvegicus (Rat).